The primary structure comprises 257 residues: Gamma-secretase subunit APH-1B (257 aa).

Transmembrane regions (helical) follow at residues 5 to 25, 32 to 52, 70 to 90, 115 to 135, 158 to 178, 186 to 206, and 213 to 233; these read VFFG…VFTI, IIFL…SSLV, YLLI…RFAY, LLAY…SFVN, YSAF…IVFF, WGIL…TFIS, and LASA…AAGG.

This sequence belongs to the APH-1 family. Probable component of the gamma-secretase complex, a complex composed of a presenilin homodimer (PSEN1 or PSEN2), nicastrin (NCSTN), APH1 (APH1A or APH1B) and PEN2. Such minimal complex is sufficient for secretase activity, although other components may exist. Interacts with PSEN1 and PSEN2.

The protein resides in the membrane. Probable subunit of the gamma-secretase complex, an endoprotease complex that catalyzes the intramembrane cleavage of integral proteins such as Notch receptors and APP (amyloid-beta precursor protein). It probably represents a stabilizing cofactor for the presenilin homodimer that promotes the formation of a stable complex. Probably present in a minority of gamma-secretase complexes compared to APH1A. This Pongo abelii (Sumatran orangutan) protein is Gamma-secretase subunit APH-1B (APH1B).